We begin with the raw amino-acid sequence, 146 residues long: Hemoglobin subunit beta-2 (146 aa).

One can recognise a Globin domain in the interval 2–146 (EWTDFERATI…VVSSLGRQYH (145 aa)). Positions 63 and 92 each coordinate heme b.

It belongs to the globin family. Hb2 is a heterotetramer of two alpha chains and two beta-2 chains. As to expression, red blood cells.

Involved in oxygen transport from gills to the various peripheral tissues. In Pseudaphritis urvillii (Congolli), this protein is Hemoglobin subunit beta-2 (hbb2).